The chain runs to 100 residues: Urease subunit gamma (100 aa).

This sequence belongs to the urease gamma subunit family. Heterotrimer of UreA (gamma), UreB (beta) and UreC (alpha) subunits. Three heterotrimers associate to form the active enzyme.

Its subcellular location is the cytoplasm. The enzyme catalyses urea + 2 H2O + H(+) = hydrogencarbonate + 2 NH4(+). The protein operates within nitrogen metabolism; urea degradation; CO(2) and NH(3) from urea (urease route): step 1/1. The chain is Urease subunit gamma from Cereibacter sphaeroides (strain ATCC 17029 / ATH 2.4.9) (Rhodobacter sphaeroides).